Consider the following 192-residue polypeptide: Ribosomal RNA large subunit methyltransferase E (192 aa).

S-adenosyl-L-methionine-binding residues include Gly-46, Trp-48, Asp-63, Asp-79, and Asp-102. The active-site Proton acceptor is the Lys-142.

The protein belongs to the class I-like SAM-binding methyltransferase superfamily. RNA methyltransferase RlmE family.

The protein localises to the cytoplasm. It catalyses the reaction uridine(2552) in 23S rRNA + S-adenosyl-L-methionine = 2'-O-methyluridine(2552) in 23S rRNA + S-adenosyl-L-homocysteine + H(+). Its function is as follows. Specifically methylates the uridine in position 2552 of 23S rRNA at the 2'-O position of the ribose in the fully assembled 50S ribosomal subunit. In Wolbachia pipientis wMel, this protein is Ribosomal RNA large subunit methyltransferase E.